Here is a 410-residue protein sequence, read N- to C-terminus: Toluene 1,2-dioxygenase system ferredoxin--NAD(+) reductase component (410 aa).

4-35 (HVAIIGNGVGGFTTAQALRAEGFEGRISLIGD) serves as a coordination point for FAD. 145-173 (RLLIVGGGLIGCEVATTARKLGLSVTILE) provides a ligand contact to NAD(+).

This sequence belongs to the bacterial ring-hydroxylating dioxygenase ferredoxin reductase family. As to quaternary structure, this dioxygenase system consists of four proteins: the two subunits of the hydroxylase component (todC1 and todC2), a ferredoxin (TodB) and a ferredoxin reductase (TodA). The cofactor is FAD.

It carries out the reaction 2 reduced [2Fe-2S]-[ferredoxin] + NAD(+) + H(+) = 2 oxidized [2Fe-2S]-[ferredoxin] + NADH. It participates in xenobiotic degradation; toluene degradation. Its function is as follows. Part of the electron transfer component of toluene 1,2-dioxygenase, transfers electrons from ferredoxin (TodB) to NADH. The sequence is that of Toluene 1,2-dioxygenase system ferredoxin--NAD(+) reductase component (todA) from Pseudomonas putida (strain ATCC 700007 / DSM 6899 / JCM 31910 / BCRC 17059 / LMG 24140 / F1).